The following is a 457-amino-acid chain: Succinate-semialdehyde dehydrogenase [NADP(+)] 1 (457 aa).

An NADP(+)-binding site is contributed by 209 to 214 (GSEPAG). Catalysis depends on residues Glu-231 and Cys-265.

Belongs to the aldehyde dehydrogenase family.

The catalysed reaction is succinate semialdehyde + NAD(+) + H2O = succinate + NADH + 2 H(+). The enzyme catalyses succinate semialdehyde + NADP(+) + H2O = succinate + NADPH + 2 H(+). In terms of biological role, catalyzes the NADP(+)-dependent oxidation of succinate semialdehyde to succinate. It is believed to be the main source of succinate semialdehyde dehydrogenase activity in Mycobacterium. The protein is Succinate-semialdehyde dehydrogenase [NADP(+)] 1 (gabD1) of Mycobacterium bovis (strain ATCC BAA-935 / AF2122/97).